We begin with the raw amino-acid sequence, 204 residues long: Partner of Y14 and mago (204 aa).

Disordered regions lie at residues 1-121 and 133-153; these read MGSR…QSVN and SSNNDVCGGAPNPGTTGEDVE. Residues 7-36 show a composition bias toward basic and acidic residues; it reads EQGKRMAELSKNLKEGERILEPTRRPDGTL. Polar residues predominate over residues 104 to 121; it reads KANSSEDGSASNGSQSVN. Residues 195-200 carry the Nuclear export signal motif; that stretch reads ELKALE.

The protein belongs to the pym family. Interacts with MAGO and Y14. Expressed in root and shoot meristems, cotyledons, vascular tissues of leaves, receptacle of flowers and siliques, and pollen grains.

It localises to the cytoplasm. It is found in the nucleus. Its subcellular location is the nucleolus. The protein resides in the nucleoplasm. Key regulator of the exon junction complex (EJC), a multiprotein complex that associates immediately upstream of the exon-exon junction on mRNAs and serves as a positional landmark for the intron exon structure of genes and directs post-transcriptional processes in the cytoplasm such as mRNA export, nonsense-mediated mRNA decay (NMD) or translation. Acts as an EJC disassembly factor, allowing translation-dependent EJC removal and recycling by disrupting mature EJC from spliced mRNAs. Can increase in vitro the expression from reporter constructs that contain leader introns required for the expression of different genes. In association with MAGO and PYM, participates in intron-mediated enhancement of gene expression. The chain is Partner of Y14 and mago from Arabidopsis thaliana (Mouse-ear cress).